The chain runs to 309 residues: RuBisCO operon transcriptional regulator (309 aa).

Positions 6 to 63 (ATLHQLKIFAAVARHMSFARAAEELHLTPPALSIQVRQLAEAVGQPLFDQIGKKIYLT) constitute an HTH lysR-type domain. Residues 23–42 (FARAAEELHLTPPALSIQVR) constitute a DNA-binding region (H-T-H motif).

It belongs to the LysR transcriptional regulatory family.

Functionally, trans-acting transcriptional regulator of RuBisCO genes (rbcL1S1) expression. This is RuBisCO operon transcriptional regulator (rbcR) from Acidithiobacillus ferrooxidans (Thiobacillus ferrooxidans).